The chain runs to 473 residues: Siroheme synthase (473 aa).

Residues 1–203 (MTLFPIFADL…QQPGLAEQEL (203 aa)) are precorrin-2 dehydrogenase /sirohydrochlorin ferrochelatase. NAD(+) is bound by residues 22-23 (AV) and 43-44 (PR). The residue at position 128 (Ser-128) is a Phosphoserine. The interval 216–473 (GSVVLVGAGP…GLPGPQALAA (258 aa)) is uroporphyrinogen-III C-methyltransferase. Pro-225 contacts S-adenosyl-L-methionine. The active-site Proton acceptor is the Asp-248. Lys-270 (proton donor) is an active-site residue. S-adenosyl-L-methionine is bound by residues 302 to 304 (GGD), Ile-307, 332 to 333 (TA), Met-384, and Gly-413.

In the N-terminal section; belongs to the precorrin-2 dehydrogenase / sirohydrochlorin ferrochelatase family. This sequence in the C-terminal section; belongs to the precorrin methyltransferase family.

The enzyme catalyses uroporphyrinogen III + 2 S-adenosyl-L-methionine = precorrin-2 + 2 S-adenosyl-L-homocysteine + H(+). The catalysed reaction is precorrin-2 + NAD(+) = sirohydrochlorin + NADH + 2 H(+). It catalyses the reaction siroheme + 2 H(+) = sirohydrochlorin + Fe(2+). Its pathway is cofactor biosynthesis; adenosylcobalamin biosynthesis; precorrin-2 from uroporphyrinogen III: step 1/1. The protein operates within cofactor biosynthesis; adenosylcobalamin biosynthesis; sirohydrochlorin from precorrin-2: step 1/1. It participates in porphyrin-containing compound metabolism; siroheme biosynthesis; precorrin-2 from uroporphyrinogen III: step 1/1. It functions in the pathway porphyrin-containing compound metabolism; siroheme biosynthesis; siroheme from sirohydrochlorin: step 1/1. Its pathway is porphyrin-containing compound metabolism; siroheme biosynthesis; sirohydrochlorin from precorrin-2: step 1/1. Its function is as follows. Multifunctional enzyme that catalyzes the SAM-dependent methylations of uroporphyrinogen III at position C-2 and C-7 to form precorrin-2 via precorrin-1. Then it catalyzes the NAD-dependent ring dehydrogenation of precorrin-2 to yield sirohydrochlorin. Finally, it catalyzes the ferrochelation of sirohydrochlorin to yield siroheme. The protein is Siroheme synthase of Bordetella parapertussis (strain 12822 / ATCC BAA-587 / NCTC 13253).